The following is a 227-amino-acid chain: Endo-1,4-beta-xylanase 2 (227 aa).

A signal peptide spans 1 to 36 (MVSIKSVLAAATAVSSALAAPFDFVPRDNSTALQAR). Asn-29 carries N-linked (GlcNAc...) asparagine glycosylation. The 189-residue stretch at 37 to 225 (QVTPNAEGWH…SSGESDIYVQ (189 aa)) folds into the GH11 domain. The Nucleophile role is filled by Glu-121. Glu-212 serves as the catalytic Proton donor.

The protein belongs to the glycosyl hydrolase 11 (cellulase G) family.

The protein resides in the secreted. It catalyses the reaction Endohydrolysis of (1-&gt;4)-beta-D-xylosidic linkages in xylans.. It functions in the pathway glycan degradation; xylan degradation. Endo-1,4-beta-xylanase involved in the hydrolysis of xylan, a major structural heterogeneous polysaccharide found in plant biomass representing the second most abundant polysaccharide in the biosphere, after cellulose. The protein is Endo-1,4-beta-xylanase 2 (xyn2) of Humicola insolens (Soft-rot fungus).